The following is a 321-amino-acid chain: Torsin-2A (321 aa).

The N-terminal stretch at 1–26 is a signal peptide; the sequence is MAAATRSCRPWGSLLGLIWLVSAAAA. An ATP-binding site is contributed by 93–100; the sequence is GWTGTGKS. An N-linked (GlcNAc...) asparagine glycan is attached at N149.

The protein belongs to the ClpA/ClpB family. Torsin subfamily. In terms of assembly, homohexamer. Interacts with TOR1AIP1.

It is found in the endoplasmic reticulum lumen. The sequence is that of Torsin-2A (TOR2A) from Bos taurus (Bovine).